We begin with the raw amino-acid sequence, 250 residues long: Methylthioribulose-1-phosphate dehydratase (250 aa).

Cysteine 103 is a binding site for substrate. Zn(2+) is bound by residues histidine 121 and histidine 123. Glutamate 146 functions as the Proton donor/acceptor in the catalytic mechanism. A Zn(2+)-binding site is contributed by histidine 211.

It belongs to the aldolase class II family. MtnB subfamily. Zn(2+) serves as cofactor.

It localises to the cytoplasm. It carries out the reaction 5-(methylsulfanyl)-D-ribulose 1-phosphate = 5-methylsulfanyl-2,3-dioxopentyl phosphate + H2O. It participates in amino-acid biosynthesis; L-methionine biosynthesis via salvage pathway; L-methionine from S-methyl-5-thio-alpha-D-ribose 1-phosphate: step 2/6. In terms of biological role, catalyzes the dehydration of methylthioribulose-1-phosphate (MTRu-1-P) into 2,3-diketo-5-methylthiopentyl-1-phosphate (DK-MTP-1-P). This is Methylthioribulose-1-phosphate dehydratase from Clavispora lusitaniae (strain ATCC 42720) (Yeast).